A 520-amino-acid polypeptide reads, in one-letter code: Flavin-dependent halogenase radH (520 aa).

The FAD site is built by G14, A17, and E47. 2 residues coordinate chloride: S330 and G331.

This sequence belongs to the flavin-dependent halogenase family.

The protein operates within secondary metabolite biosynthesis. Its function is as follows. Non-heme halogenase; part of the gene cluster that mediates the biosynthesis of radicicol, a resorcylic acid lactone (RAL) that irreversibly inhibits the HSP90 molecular chaperone, an important target for cancer chemotherapy. The cluster encodes only two apparent post-PKS enzymes, a cytochrome P450 monooxygenase (radP) and a non-heme halogenase (radH) that introduce the epoxide and the chlorine, respectively. If this cluster includes all the genes required for radicicol biosynthesis, the remaining structural features of radicicol are presumably generated by the PKSs rads1 and rads2. The C-2' ketone could arise if the R-PKS rads1 and NR-PKS rads2 each carry out four iterations, in contrast to the five iteration-three iteration split for the hypothemycin PKSs. The origin of the cis 5',6' double bond is not known. The radicicol R-PKS rads1 ER domain may catalyze either double bond isomerization or reduction in the third iteration. The polypeptide is Flavin-dependent halogenase radH (Floropilus chiversii (Chaetomium chiversii)).